The chain runs to 353 residues: Photosystem II D2 protein (353 aa).

An N-acetylthreonine modification is found at Thr-2. A Phosphothreonine modification is found at Thr-2. A helical membrane pass occupies residues 41–61; that stretch reads CAYFALGGWFTGTTFVTSWYT. Chlorophyll a is bound at residue His-118. The helical transmembrane segment at 125–141 threads the bilayer; the sequence is GFMLRQFELARSVQLRP. Gln-130 and Asn-143 together coordinate pheophytin a. A helical transmembrane segment spans residues 153-166; sequence VFVSVFLIYPLGQS. Position 198 (His-198) interacts with chlorophyll a. Residues 208–228 form a helical membrane-spanning segment; sequence AALLCAIHGATVENTLFEDGD. A plastoquinone-binding residues include His-215 and Phe-262. His-215 lines the Fe cation pocket. His-269 serves as a coordination point for Fe cation. A helical membrane pass occupies residues 279-295; the sequence is GLWMSALGVVGLALNLR.

It belongs to the reaction center PufL/M/PsbA/D family. PSII is composed of 1 copy each of membrane proteins PsbA, PsbB, PsbC, PsbD, PsbE, PsbF, PsbH, PsbI, PsbJ, PsbK, PsbL, PsbM, PsbT, PsbX, PsbY, PsbZ, Psb30/Ycf12, at least 3 peripheral proteins of the oxygen-evolving complex and a large number of cofactors. It forms dimeric complexes. Requires The D1/D2 heterodimer binds P680, chlorophylls that are the primary electron donor of PSII, and subsequent electron acceptors. It shares a non-heme iron and each subunit binds pheophytin, quinone, additional chlorophylls, carotenoids and lipids. There is also a Cl(-1) ion associated with D1 and D2, which is required for oxygen evolution. The PSII complex binds additional chlorophylls, carotenoids and specific lipids. as cofactor.

It localises to the plastid. It is found in the chloroplast thylakoid membrane. The catalysed reaction is 2 a plastoquinone + 4 hnu + 2 H2O = 2 a plastoquinol + O2. Functionally, photosystem II (PSII) is a light-driven water:plastoquinone oxidoreductase that uses light energy to abstract electrons from H(2)O, generating O(2) and a proton gradient subsequently used for ATP formation. It consists of a core antenna complex that captures photons, and an electron transfer chain that converts photonic excitation into a charge separation. The D1/D2 (PsbA/PsbD) reaction center heterodimer binds P680, the primary electron donor of PSII as well as several subsequent electron acceptors. D2 is needed for assembly of a stable PSII complex. The sequence is that of Photosystem II D2 protein from Olimarabidopsis pumila (Dwarf rocket).